A 550-amino-acid polypeptide reads, in one-letter code: Hydroxylamine reductase (550 aa).

Positions 3, 6, 18, and 25 each coordinate [2Fe-2S] cluster. Hybrid [4Fe-2O-2S] cluster contacts are provided by His249, Glu273, Cys317, Cys405, Cys433, Cys458, Glu492, and Lys494. Cysteine persulfide is present on Cys405.

It belongs to the HCP family. [2Fe-2S] cluster serves as cofactor. Hybrid [4Fe-2O-2S] cluster is required as a cofactor.

Its subcellular location is the cytoplasm. The catalysed reaction is A + NH4(+) + H2O = hydroxylamine + AH2 + H(+). In terms of biological role, catalyzes the reduction of hydroxylamine to form NH(3) and H(2)O. The chain is Hydroxylamine reductase from Yersinia pseudotuberculosis serotype IB (strain PB1/+).